The following is a 480-amino-acid chain: Bifunctional protein HldE (480 aa).

The interval M1–Q316 is ribokinase. N192 to E195 serves as a coordination point for ATP. D261 is an active-site residue. A cytidylyltransferase region spans residues F342 to Q480.

It in the N-terminal section; belongs to the carbohydrate kinase PfkB family. In the C-terminal section; belongs to the cytidylyltransferase family. In terms of assembly, homodimer.

It carries out the reaction D-glycero-beta-D-manno-heptose 7-phosphate + ATP = D-glycero-beta-D-manno-heptose 1,7-bisphosphate + ADP + H(+). It catalyses the reaction D-glycero-beta-D-manno-heptose 1-phosphate + ATP + H(+) = ADP-D-glycero-beta-D-manno-heptose + diphosphate. The protein operates within nucleotide-sugar biosynthesis; ADP-L-glycero-beta-D-manno-heptose biosynthesis; ADP-L-glycero-beta-D-manno-heptose from D-glycero-beta-D-manno-heptose 7-phosphate: step 1/4. It functions in the pathway nucleotide-sugar biosynthesis; ADP-L-glycero-beta-D-manno-heptose biosynthesis; ADP-L-glycero-beta-D-manno-heptose from D-glycero-beta-D-manno-heptose 7-phosphate: step 3/4. In terms of biological role, catalyzes the phosphorylation of D-glycero-D-manno-heptose 7-phosphate at the C-1 position to selectively form D-glycero-beta-D-manno-heptose-1,7-bisphosphate. Its function is as follows. Catalyzes the ADP transfer from ATP to D-glycero-beta-D-manno-heptose 1-phosphate, yielding ADP-D-glycero-beta-D-manno-heptose. The polypeptide is Bifunctional protein HldE (Hydrogenovibrio crunogenus (strain DSM 25203 / XCL-2) (Thiomicrospira crunogena)).